A 241-amino-acid chain; its full sequence is Octanoyltransferase (241 aa).

In terms of domain architecture, BPL/LPL catalytic spans 43 to 228 (ADTPDEIWLV…RLTANLDGSP (186 aa)). Substrate is bound by residues 83 to 90 (RGGQITYH), 159 to 161 (ALG), and 172 to 174 (GVS). The Acyl-thioester intermediate role is filled by C190.

The protein belongs to the LipB family.

Its subcellular location is the cytoplasm. It catalyses the reaction octanoyl-[ACP] + L-lysyl-[protein] = N(6)-octanoyl-L-lysyl-[protein] + holo-[ACP] + H(+). It participates in protein modification; protein lipoylation via endogenous pathway; protein N(6)-(lipoyl)lysine from octanoyl-[acyl-carrier-protein]: step 1/2. Catalyzes the transfer of endogenously produced octanoic acid from octanoyl-acyl-carrier-protein onto the lipoyl domains of lipoate-dependent enzymes. Lipoyl-ACP can also act as a substrate although octanoyl-ACP is likely to be the physiological substrate. The sequence is that of Octanoyltransferase from Paraburkholderia phytofirmans (strain DSM 17436 / LMG 22146 / PsJN) (Burkholderia phytofirmans).